The chain runs to 158 residues: SsrA-binding protein (158 aa).

Positions 133–148 are enriched in basic and acidic residues; the sequence is KAQDKRETSAKRDWNR. The disordered stretch occupies residues 133–158; sequence KAQDKRETSAKRDWNRQKARLLKQNG. Over residues 149–158 the composition is skewed to basic residues; the sequence is QKARLLKQNG.

Belongs to the SmpB family.

It localises to the cytoplasm. Required for rescue of stalled ribosomes mediated by trans-translation. Binds to transfer-messenger RNA (tmRNA), required for stable association of tmRNA with ribosomes. tmRNA and SmpB together mimic tRNA shape, replacing the anticodon stem-loop with SmpB. tmRNA is encoded by the ssrA gene; the 2 termini fold to resemble tRNA(Ala) and it encodes a 'tag peptide', a short internal open reading frame. During trans-translation Ala-aminoacylated tmRNA acts like a tRNA, entering the A-site of stalled ribosomes, displacing the stalled mRNA. The ribosome then switches to translate the ORF on the tmRNA; the nascent peptide is terminated with the 'tag peptide' encoded by the tmRNA and targeted for degradation. The ribosome is freed to recommence translation, which seems to be the essential function of trans-translation. The protein is SsrA-binding protein of Jannaschia sp. (strain CCS1).